A 515-amino-acid polypeptide reads, in one-letter code: Bifunctional purine biosynthesis protein PurH (515 aa).

Residues 1–145 enclose the MGS-like domain; that stretch reads MTKRALISVS…KNHASVTVVV (145 aa).

It belongs to the PurH family.

The enzyme catalyses (6R)-10-formyltetrahydrofolate + 5-amino-1-(5-phospho-beta-D-ribosyl)imidazole-4-carboxamide = 5-formamido-1-(5-phospho-D-ribosyl)imidazole-4-carboxamide + (6S)-5,6,7,8-tetrahydrofolate. It carries out the reaction IMP + H2O = 5-formamido-1-(5-phospho-D-ribosyl)imidazole-4-carboxamide. It functions in the pathway purine metabolism; IMP biosynthesis via de novo pathway; 5-formamido-1-(5-phospho-D-ribosyl)imidazole-4-carboxamide from 5-amino-1-(5-phospho-D-ribosyl)imidazole-4-carboxamide (10-formyl THF route): step 1/1. Its pathway is purine metabolism; IMP biosynthesis via de novo pathway; IMP from 5-formamido-1-(5-phospho-D-ribosyl)imidazole-4-carboxamide: step 1/1. This chain is Bifunctional purine biosynthesis protein PurH, found in Streptococcus pyogenes serotype M2 (strain MGAS10270).